Here is a 194-residue protein sequence, read N- to C-terminus: Adenylate kinase isoenzyme 1 (194 aa).

Residue Met-1 is modified to N-acetylmethionine. Residue 18–23 coordinates ATP; sequence GSGKGT. Position 38 is a phosphoserine (Ser-38). Residues 38–67 form an NMP region; it reads STGDLLRAEVSSGSARGKMLSEIMEKGQLV. AMP contacts are provided by residues Thr-39, Arg-44, 65-67, 94-97, and Gln-101; these read QLV and GYPR. The interval 131 to 141 is LID; sequence KRGETSGRVDD. Position 132 (Arg-132) interacts with ATP. Positions 138 and 149 each coordinate AMP. An ATP-binding site is contributed by Gly-177.

The protein belongs to the adenylate kinase family. AK1 subfamily. Monomer. Mg(2+) is required as a cofactor.

Its subcellular location is the cytoplasm. The catalysed reaction is a ribonucleoside 5'-phosphate + ATP = a ribonucleoside 5'-diphosphate + ADP. It carries out the reaction AMP + ATP = 2 ADP. It catalyses the reaction dAMP + ATP = dADP + ADP. The enzyme catalyses dATP + AMP = dADP + ADP. The catalysed reaction is dAMP + dATP = 2 dADP. It carries out the reaction a 2'-deoxyribonucleoside 5'-diphosphate + ATP = a 2'-deoxyribonucleoside 5'-triphosphate + ADP. It catalyses the reaction a ribonucleoside 5'-diphosphate + ATP = a ribonucleoside 5'-triphosphate + ADP. The enzyme catalyses CDP + GTP = CTP + GDP. The catalysed reaction is GDP + ATP = GTP + ADP. It carries out the reaction UDP + ATP = UTP + ADP. It catalyses the reaction GTP + UDP = UTP + GDP. The enzyme catalyses dTDP + GTP = dTTP + GDP. The catalysed reaction is dCDP + GTP = dCTP + GDP. It carries out the reaction dGDP + ATP = dGTP + ADP. It catalyses the reaction dADP + GTP = dATP + GDP. The enzyme catalyses thiamine diphosphate + ADP = thiamine triphosphate + AMP. In terms of biological role, catalyzes the reversible transfer of the terminal phosphate group between ATP and AMP. Also displays broad nucleoside diphosphate kinase activity. Plays an important role in cellular energy homeostasis and in adenine nucleotide metabolism. Also catalyzes at a very low rate the synthesis of thiamine triphosphate (ThTP) from thiamine diphosphate (ThDP) and ADP. The protein is Adenylate kinase isoenzyme 1 of Sus scrofa (Pig).